Consider the following 130-residue polypeptide: UPF0102 protein RPA0323 (130 aa).

The protein belongs to the UPF0102 family.

This is UPF0102 protein RPA0323 from Rhodopseudomonas palustris (strain ATCC BAA-98 / CGA009).